A 253-amino-acid chain; its full sequence is 5'/3'-nucleotidase SurE (253 aa).

Residues D8, D9, S39, and N92 each contribute to the a divalent metal cation site.

The protein belongs to the SurE nucleotidase family. A divalent metal cation is required as a cofactor.

Its subcellular location is the cytoplasm. It carries out the reaction a ribonucleoside 5'-phosphate + H2O = a ribonucleoside + phosphate. The enzyme catalyses a ribonucleoside 3'-phosphate + H2O = a ribonucleoside + phosphate. It catalyses the reaction [phosphate](n) + H2O = [phosphate](n-1) + phosphate + H(+). Its function is as follows. Nucleotidase with a broad substrate specificity as it can dephosphorylate various ribo- and deoxyribonucleoside 5'-monophosphates and ribonucleoside 3'-monophosphates with highest affinity to 3'-AMP. Also hydrolyzes polyphosphate (exopolyphosphatase activity) with the preference for short-chain-length substrates (P20-25). Might be involved in the regulation of dNTP and NTP pools, and in the turnover of 3'-mononucleotides produced by numerous intracellular RNases (T1, T2, and F) during the degradation of various RNAs. The sequence is that of 5'/3'-nucleotidase SurE from Erwinia tasmaniensis (strain DSM 17950 / CFBP 7177 / CIP 109463 / NCPPB 4357 / Et1/99).